The following is a 294-amino-acid chain: MPWLQVRLAITPEQAETYEDALLEVGAVSVTFMDAEDQPIFEPDLGTTPLWSRTHLLALFEADTDETALLAHLALLTGGDLPEHHVEEIADQDWERSWMDNFQPMRFGRRLWIVPSWHAAPEPDAVNLLLDPGLAFGTGTHPTTALCLEWLDGQELAGRQVLDFGCGSGILAIAALLLGAERAVGTDIDPQALEASRDNASRNGIEPARFPVYLPADLPQRQADVLVANILAGPLVSLAPQLTGLVRPGGLLALSGILAEQAEEVRAAYSAHFDLDPTAEREGWIRISGRRRAD.

S-adenosyl-L-methionine-binding residues include threonine 144, glycine 165, aspartate 187, and asparagine 229.

This sequence belongs to the methyltransferase superfamily. PrmA family.

The protein resides in the cytoplasm. It catalyses the reaction L-lysyl-[protein] + 3 S-adenosyl-L-methionine = N(6),N(6),N(6)-trimethyl-L-lysyl-[protein] + 3 S-adenosyl-L-homocysteine + 3 H(+). Functionally, methylates ribosomal protein L11. This Pseudomonas aeruginosa (strain LESB58) protein is Ribosomal protein L11 methyltransferase.